A 437-amino-acid polypeptide reads, in one-letter code: tRNA pseudouridine synthase Pus10 (437 aa).

The 123-residue stretch at 76–198 (VARDVVEHLS…GGGVDIQVNS (123 aa)) folds into the THUMP domain. The active-site Nucleophile is the aspartate 253. Substrate-binding residues include tyrosine 321 and tyrosine 394.

Belongs to the pseudouridine synthase Pus10 family.

It catalyses the reaction uridine(54) in tRNA = pseudouridine(54) in tRNA. The catalysed reaction is uridine(55) in tRNA = pseudouridine(55) in tRNA. In terms of biological role, responsible for synthesis of pseudouridine from uracil-54 and uracil-55 in the psi GC loop of transfer RNAs. The sequence is that of tRNA pseudouridine synthase Pus10 from Aeropyrum pernix (strain ATCC 700893 / DSM 11879 / JCM 9820 / NBRC 100138 / K1).